The chain runs to 494 residues: GPI alpha-1,6-mannosyltransferase 2 (494 aa).

The Cytoplasmic segment spans residues methionine 1 to arginine 13. Residues phenylalanine 14–proline 34 form a helical membrane-spanning segment. The Lumenal portion of the chain corresponds to aspartate 35–histidine 77. The helical transmembrane segment at glycine 78–glycine 98 threads the bilayer. At threonine 99–serine 113 the chain is on the cytoplasmic side. Residues cysteine 114–leucine 134 traverse the membrane as a helical segment. At histidine 135–aspartate 136 the chain is on the lumenal side. A helical membrane pass occupies residues leucine 137–leucine 157. Topologically, residues serine 158–asparagine 161 are cytoplasmic. Residues valine 162–glycine 182 traverse the membrane as a helical segment. The Lumenal segment spans residues glutamine 183–serine 192. A helical membrane pass occupies residues glycine 193 to leucine 213. Residues leucine 214–leucine 234 lie on the Cytoplasmic side of the membrane. A helical transmembrane segment spans residues phenylalanine 235–phenylalanine 255. The Lumenal portion of the chain corresponds to glutamine 256–asparagine 327. A helical membrane pass occupies residues phenylalanine 328–threonine 348. The Cytoplasmic portion of the chain corresponds to histidine 349–lysine 379. A helical transmembrane segment spans residues valine 380–valine 400. At glutamine 401–arginine 470 the chain is on the lumenal side. A helical transmembrane segment spans residues cysteine 471–leucine 491. Over proline 492–threonine 494 the chain is Cytoplasmic.

The protein belongs to the PIGV family. Post-translationally, not N-glycosylated.

The protein localises to the endoplasmic reticulum membrane. The protein operates within glycolipid biosynthesis; glycosylphosphatidylinositol-anchor biosynthesis. In terms of biological role, alpha-1,6-mannosyltransferase that catalyzes the transfer of the second mannose, via an alpha-1,6 bond, from a dolichol-phosphate-mannose (Dol-P-Man) to the alpha-D-Man-(1-&gt;4)-alpha-D-GlcN-(1-&gt;6)-(1-radyl,2-acyl-sn-glycero-3-phospho)-2-acyl-inositol intermediate to generate an alpha-D-Man-(1-&gt;6)-alpha-D-Man-(1-&gt;4)-alpha-D-GlcN-(1-&gt;6)-(1-radyl,2-acyl-sn-glycero-3-phospho)-2-acyl-inositol and participates in the seventh step of the glycosylphosphatidylinositol-anchor biosynthesis. Also transfers the second mannose on a 2-PEtn-alpha-D-Man-(1-&gt;4)-alpha-D-GlcN-(1-&gt;6)-(1-radyl,2-acyl-sn-glycero-3-phospho)-2-acyl-inositol. In Cricetulus griseus (Chinese hamster), this protein is GPI alpha-1,6-mannosyltransferase 2.